The chain runs to 921 residues: Translation initiation factor IF-2 (921 aa).

Disordered stretches follow at residues 81–118, 175–194, and 219–301; these read AVAE…AAAP, PVVE…ANQA, and VAPA…KKHE. The span at 96-112 shows a compositional bias: pro residues; the sequence is PAAPTPPEVPAAAPAPP. The span at 229–241 shows a compositional bias: low complexity; that stretch reads RPSPAAGAPSRGA. A compositionally biased stretch (basic and acidic residues) spans 292–301; it reads KKKEQPKKHE. Residues 421-590 form the tr-type G domain; that stretch reads KRPPVVTIMG…LLQADLMELK (170 aa). Positions 430-437 are G1; that stretch reads GHVDHGKT. 430-437 is a binding site for GTP; the sequence is GHVDHGKT. The segment at 455-459 is G2; sequence GITQH. A G3 region spans residues 476-479; it reads DTPG. GTP-binding positions include 476-480 and 530-533; these read DTPGH and NKID. The tract at residues 530–533 is G4; the sequence is NKID. The segment at 566-568 is G5; the sequence is SAK.

It belongs to the TRAFAC class translation factor GTPase superfamily. Classic translation factor GTPase family. IF-2 subfamily.

It is found in the cytoplasm. Its function is as follows. One of the essential components for the initiation of protein synthesis. Protects formylmethionyl-tRNA from spontaneous hydrolysis and promotes its binding to the 30S ribosomal subunits. Also involved in the hydrolysis of GTP during the formation of the 70S ribosomal complex. The chain is Translation initiation factor IF-2 from Pelobacter propionicus (strain DSM 2379 / NBRC 103807 / OttBd1).